The chain runs to 156 residues: Baculoviral IAP repeat-containing protein 5.2 (156 aa).

The BIR repeat unit spans residues 30–100 (RLSTFANWPF…KHSPSCLFIA (71 aa)). At Thr-46 the chain carries Phosphothreonine; by CDK1. Cys-69, Cys-72, His-89, and Cys-96 together coordinate Zn(2+).

It belongs to the IAP family. Component of the CPC at least composed of survivin/birc5, incenp, cdca8/borealin and/or cdca9/dasra-A, and aurkb/aurora-B. Interacts directly with incenp (via N-terminus). Interacts with rxra; the interaction is stronger in the absence of 9-cis retinoic acids. In terms of processing, ubiquitination is required for centrosome-targeting.

The protein localises to the cytoplasm. Its subcellular location is the nucleus. The protein resides in the chromosome. It is found in the centromere. It localises to the cytoskeleton. The protein localises to the spindle. Component of the chromosomal passenger complex (CPC), a complex that acts as a key regulator of mitosis. The CPC complex has essential functions at the centromere in ensuring correct chromosome alignment and segregation and is required for chromatin-induced microtubule stabilization and spindle assembly. Does not appear to exhibit anti-apoptotic activity. Plays a role in increasing blood vessel size during development. This Xenopus tropicalis (Western clawed frog) protein is Baculoviral IAP repeat-containing protein 5.2 (birc5.2).